The primary structure comprises 352 residues: Alanine racemase (352 aa).

K33 functions as the Proton acceptor; specific for D-alanine in the catalytic mechanism. K33 carries the N6-(pyridoxal phosphate)lysine modification. R129 contributes to the substrate binding site. Y250 functions as the Proton acceptor; specific for L-alanine in the catalytic mechanism. Residue M298 participates in substrate binding.

The protein belongs to the alanine racemase family. Pyridoxal 5'-phosphate is required as a cofactor.

The enzyme catalyses L-alanine = D-alanine. The protein operates within amino-acid biosynthesis; D-alanine biosynthesis; D-alanine from L-alanine: step 1/1. In terms of biological role, catalyzes the interconversion of L-alanine and D-alanine. May also act on other amino acids. This Neisseria meningitidis serogroup C / serotype 2a (strain ATCC 700532 / DSM 15464 / FAM18) protein is Alanine racemase (alr).